The primary structure comprises 90 residues: MDVLVILKVFPESDEINLTQLSEEIKKRLPEGYRLVKNETEPIAYGLKALIAYIQMPENTEGGTDKLEELVNGIEGVSHAEVVNVTRLGF.

The protein belongs to the EF-1-beta/EF-1-delta family.

Functionally, promotes the exchange of GDP for GTP in EF-1-alpha/GDP, thus allowing the regeneration of EF-1-alpha/GTP that could then be used to form the ternary complex EF-1-alpha/GTP/AAtRNA. The chain is Elongation factor 1-beta from Sulfolobus acidocaldarius (strain ATCC 33909 / DSM 639 / JCM 8929 / NBRC 15157 / NCIMB 11770).